The sequence spans 428 residues: UPF0597 protein BF3560 (428 aa).

Belongs to the UPF0597 family.

The polypeptide is UPF0597 protein BF3560 (Bacteroides fragilis (strain ATCC 25285 / DSM 2151 / CCUG 4856 / JCM 11019 / LMG 10263 / NCTC 9343 / Onslow / VPI 2553 / EN-2)).